A 193-amino-acid chain; its full sequence is Peptidyl-tRNA hydrolase (193 aa).

Tyr-18 is a binding site for tRNA. The Proton acceptor role is filled by His-23. TRNA is bound by residues Phe-69, Asn-71, and Asn-117.

It belongs to the PTH family. As to quaternary structure, monomer.

It is found in the cytoplasm. It catalyses the reaction an N-acyl-L-alpha-aminoacyl-tRNA + H2O = an N-acyl-L-amino acid + a tRNA + H(+). Functionally, hydrolyzes ribosome-free peptidyl-tRNAs (with 1 or more amino acids incorporated), which drop off the ribosome during protein synthesis, or as a result of ribosome stalling. Catalyzes the release of premature peptidyl moieties from peptidyl-tRNA molecules trapped in stalled 50S ribosomal subunits, and thus maintains levels of free tRNAs and 50S ribosomes. The chain is Peptidyl-tRNA hydrolase from Teredinibacter turnerae (strain ATCC 39867 / T7901).